The chain runs to 539 residues: Tripartite motif-containing protein 26 (539 aa).

The segment at 16-57 (CSICLDYLRDPVTIDCGHVFCRSCTTDVRPISGSRPVCPLCK) adopts an RING-type zinc-finger fold. The B box-type zinc finger occupies 97–138 (QDAKLCERHREKLHYYCEDDGKLLCVMCRESREHRPHTAVLM). The Zn(2+) site is built by C102, H105, C124, and H130. Residues 188-227 (IVAEFEQGHQFLREREEHLLEQLAKLEQELTEGREKFKSR) are a coiled coil. A B30.2/SPRY domain is found at 295-539 (RGLREFQGKL…WPGTRLLLRP (245 aa)). The tract at residues 376–437 (REGWSEDEEE…EEEEEVLESC (62 aa)) is disordered. Over residues 380 to 434 (SEDEEEGDEEEEGEEEEEEEEAGYGDGYDDWETDEDEESLGDEEEEEEEEEEEVL) the composition is skewed to acidic residues.

The protein belongs to the TRIM/RBCC family. As to quaternary structure, interacts with TBK1; this interaction bridges together TBK1 and NEMO in order to activate TBK1. Interacts with INCA1. Autoubiquitinates upon viral infection. In turn, autoubiquitinated TRIM26 recruits NEMO and bridges TBK1-NEMO interaction.

The protein resides in the cytoplasm. Its subcellular location is the nucleus. The enzyme catalyses S-ubiquitinyl-[E2 ubiquitin-conjugating enzyme]-L-cysteine + [acceptor protein]-L-lysine = [E2 ubiquitin-conjugating enzyme]-L-cysteine + N(6)-ubiquitinyl-[acceptor protein]-L-lysine.. Its function is as follows. E3 ubiquitin-protein ligase which regulates the IFN-beta production and antiviral response downstream of various DNA-encoded pattern-recognition receptors (PRRs). Also plays a central role in determining the response to different forms of oxidative stress by controlling levels of DNA glycosylases NEIL1, NEIL3 and NTH1 that are involved in repair of damaged DNA. Promotes nuclear IRF3 ubiquitination and proteasomal degradation. Bridges together TBK1 and NEMO during the innate response to viral infection leading to the activation of TBK1. Positively regulates LPS-mediated inflammatory innate immune response by catalyzing the 'Lys-11'-linked polyubiquitination of TAB1 to enhance its activation and subsequent NF-kappa-B and MAPK signaling. In a manner independent of its catalytic activity, inhibits WWP2, a SOX2-directed E3 ubiquitin ligase, and thus protects SOX2 from polyubiquitination and proteasomal degradation. Ubiquitinates the histone acetyltransferase protein complex component PHF20 and thereby triggers its degradation in the nucleus after its recruitment by the histone demethylase KDM6B, serving as a scaffold protein. Upon induction by TGF-beta, ubiquitinates the TFIID component TAF7 for proteasomal degradation. Induces ferroptosis by ubiquitinating SLC7A11, a critical protein for lipid reactive oxygen species (ROS) scavenging. The polypeptide is Tripartite motif-containing protein 26 (TRIM26) (Pan troglodytes (Chimpanzee)).